The following is a 572-amino-acid chain: Putative carbohydrate transport ATP-binding protein MPN_258 (572 aa).

ABC transporter domains are found at residues 6–253 (FRME…MGKE) and 327–572 (RFIR…LIMQ). 40–47 (GENGAGKS) provides a ligand contact to ATP.

This sequence belongs to the ABC transporter superfamily.

The protein resides in the cell membrane. Part of the ABC transporter complex involved in carbohydrates import. Probably responsible for energy coupling to the transport system. This chain is Putative carbohydrate transport ATP-binding protein MPN_258, found in Mycoplasma pneumoniae (strain ATCC 29342 / M129 / Subtype 1) (Mycoplasmoides pneumoniae).